The sequence spans 843 residues: Tetratricopeptide repeat protein 7B (843 aa).

One copy of the TPR 1 repeat lies at 97–131; that stretch reads QESNLVMAKLTYVEGDYKEALNIYARVGLDDLPLT. Ser160 and Ser202 each carry phosphoserine. TPR repeat units lie at residues 219-252, 363-396, 397-430, 479-514, 516-548, and 549-582; these read ETGLQRAHVLYFKNGNLTRGVGRFRELLRAVETR, SVVYDLLTIALGRRGQYEMLSECLERAMKFAFEE, FHLWYQFALSLMAAGKSARAVKVLKECIRLKPDD, TYSLQATDASLRGMQEGLQRKALLAFQRAHSLSPTD, QAAFYLALQLAISRQIPEALGYVRQALQLQGDD, and ANSLHLLALLLSAQKHYHDALNIIDMALSEYPEN. Phosphoserine is present on residues Ser625, Ser629, Ser630, Ser673, Ser677, Ser678, and Ser681. 4 TPR repeats span residues 696 to 729, 730 to 763, 765 to 797, and 798 to 831; these read AQIWLHAAEVYIGIGKPAEATACTQEAANLFPMS, HNVLYMRGQVAELRGHFDEARRWYEEALSISPTH, KSMQRLALVLHQLGRYSLAEKILRDAVQVNSTA, and HEVWNGLGEVLQAQGNDAAATECFLTALELEASS.

As to quaternary structure, component of a phosphatidylinositol 4-kinase (PI4K) complex, composed of PI4KA, EFR3 (EFR3A or EFR3B), TTC7 (TTC7A or TTC7B) and HYCC (HYCC1 or HYCC2). Interacts with PI4KA, interaction is direct. Interacts with EFR3 (EFR3A or EFR3B), interaction is direct. Interacts with HYCC (HYCC1 or HYCC2), interaction is direct. Association with the PI4K complex is strongly reduced by TMEM150A.

The protein resides in the cytoplasm. It localises to the cytosol. It is found in the cell membrane. Functionally, component of a complex required to localize phosphatidylinositol 4-kinase (PI4K) to the plasma membrane. The complex acts as a regulator of phosphatidylinositol 4-phosphate (PtdIns(4)P) synthesis. In the complex, plays a central role in bridging PI4KA to EFR3B and HYCC1, via direct interactions. The protein is Tetratricopeptide repeat protein 7B of Mus musculus (Mouse).